Consider the following 145-residue polypeptide: D-aminoacyl-tRNA deacylase (145 aa).

Residues 137–138 (GP) carry the Gly-cisPro motif, important for rejection of L-amino acids motif.

It belongs to the DTD family. In terms of assembly, homodimer.

It is found in the cytoplasm. The enzyme catalyses glycyl-tRNA(Ala) + H2O = tRNA(Ala) + glycine + H(+). It catalyses the reaction a D-aminoacyl-tRNA + H2O = a tRNA + a D-alpha-amino acid + H(+). In terms of biological role, an aminoacyl-tRNA editing enzyme that deacylates mischarged D-aminoacyl-tRNAs. Also deacylates mischarged glycyl-tRNA(Ala), protecting cells against glycine mischarging by AlaRS. Acts via tRNA-based rather than protein-based catalysis; rejects L-amino acids rather than detecting D-amino acids in the active site. By recycling D-aminoacyl-tRNA to D-amino acids and free tRNA molecules, this enzyme counteracts the toxicity associated with the formation of D-aminoacyl-tRNA entities in vivo and helps enforce protein L-homochirality. The polypeptide is D-aminoacyl-tRNA deacylase (Pseudomonas paraeruginosa (strain DSM 24068 / PA7) (Pseudomonas aeruginosa (strain PA7))).